The sequence spans 499 residues: Ent-kaurenoic acid oxidase 1 (499 aa).

The chain crosses the membrane as a helical span at residues 5–25 (AWWAVAAVVAALAVVALDAAV). C443 serves as a coordination point for heme.

It belongs to the cytochrome P450 family. Requires heme as cofactor.

The protein resides in the endoplasmic reticulum membrane. The enzyme catalyses ent-kaur-16-en-19-oate + 3 reduced [NADPH--hemoprotein reductase] + 3 O2 = gibberellin A12 + 3 oxidized [NADPH--hemoprotein reductase] + 4 H2O + 4 H(+). It carries out the reaction ent-kaur-16-en-19-oate + reduced [NADPH--hemoprotein reductase] + O2 = ent-7alpha-hydroxykaur-16-en-19-oate + oxidized [NADPH--hemoprotein reductase] + H2O + H(+). It catalyses the reaction ent-7alpha-hydroxykaur-16-en-19-oate + reduced [NADPH--hemoprotein reductase] + O2 = gibberellin A12 aldehyde + oxidized [NADPH--hemoprotein reductase] + 2 H2O + H(+). The catalysed reaction is gibberellin A12 aldehyde + reduced [NADPH--hemoprotein reductase] + O2 = gibberellin A12 + oxidized [NADPH--hemoprotein reductase] + H2O + 2 H(+). It functions in the pathway plant hormone biosynthesis; gibberellin biosynthesis. Catalyzes three successive oxidations of ent-kaurenoic acid giving gibberellin 12 (GA12), a key step in gibberellins (GAs) biosynthesis. GAs, which are involved many processes, including stem elongation, play a central role in plant development. The polypeptide is Ent-kaurenoic acid oxidase 1 (Hordeum vulgare (Barley)).